The chain runs to 95 residues: MIRSELIQKISEENPHLFQRDVERIVNTVFEEIIDAMARGDRVELRGFGAFSVKKRDARQGRNPRTGETVSVDEKHVPFFKTGKLLRERLNGLDE.

Belongs to the bacterial histone-like protein family. Heterodimer of an alpha and a beta chain.

Its function is as follows. This protein is one of the two subunits of integration host factor, a specific DNA-binding protein that functions in genetic recombination as well as in transcriptional and translational control. The sequence is that of Integration host factor subunit beta from Paracoccus denitrificans (strain Pd 1222).